Here is a 242-residue protein sequence, read N- to C-terminus: Small ribosomal subunit protein uS2 (242 aa).

It belongs to the universal ribosomal protein uS2 family.

This is Small ribosomal subunit protein uS2 from Shewanella sediminis (strain HAW-EB3).